We begin with the raw amino-acid sequence, 184 residues long: Type-1 fimbrial protein, A chain (184 aa).

Positions 1 to 22 (MKHKLMTSTIASLMFVAGAAVA) are cleaved as a signal peptide. A disulfide bridge connects residues cysteine 46 and cysteine 86.

It belongs to the fimbrial protein family.

It is found in the fimbrium. In terms of biological role, fimbriae (also called pili), polar filaments radiating from the surface of the bacterium to a length of 0.5-1.5 micrometers and numbering 100-300 per cell, enable bacteria to colonize the epithelium of specific host organs. The chain is Type-1 fimbrial protein, A chain (fimA) from Salmonella typhi.